The sequence spans 41 residues: Large ribosomal subunit protein bL36A (41 aa).

It belongs to the bacterial ribosomal protein bL36 family.

This Vibrio cholerae serotype O1 (strain ATCC 39541 / Classical Ogawa 395 / O395) protein is Large ribosomal subunit protein bL36A.